Consider the following 319-residue polypeptide: tRNA uridine(34) hydroxylase (319 aa).

One can recognise a Rhodanese domain in the interval leucine 124–glutamate 218. The active-site Cysteine persulfide intermediate is cysteine 178.

It belongs to the TrhO family.

The enzyme catalyses uridine(34) in tRNA + AH2 + O2 = 5-hydroxyuridine(34) in tRNA + A + H2O. Its function is as follows. Catalyzes oxygen-dependent 5-hydroxyuridine (ho5U) modification at position 34 in tRNAs. In Listeria welshimeri serovar 6b (strain ATCC 35897 / DSM 20650 / CCUG 15529 / CIP 8149 / NCTC 11857 / SLCC 5334 / V8), this protein is tRNA uridine(34) hydroxylase.